A 141-amino-acid polypeptide reads, in one-letter code: Nucleoside diphosphate kinase (141 aa).

Residues Lys11, Phe59, Arg87, Thr93, Arg104, and Asn114 each coordinate ATP. His117 acts as the Pros-phosphohistidine intermediate in catalysis.

This sequence belongs to the NDK family. Mg(2+) is required as a cofactor.

It is found in the cytoplasm. The catalysed reaction is a 2'-deoxyribonucleoside 5'-diphosphate + ATP = a 2'-deoxyribonucleoside 5'-triphosphate + ADP. It carries out the reaction a ribonucleoside 5'-diphosphate + ATP = a ribonucleoside 5'-triphosphate + ADP. Its function is as follows. Major role in the synthesis of nucleoside triphosphates other than ATP. The ATP gamma phosphate is transferred to the NDP beta phosphate via a ping-pong mechanism, using a phosphorylated active-site intermediate. The protein is Nucleoside diphosphate kinase of Staphylothermus marinus (strain ATCC 43588 / DSM 3639 / JCM 9404 / F1).